The chain runs to 363 residues: Spindle pole body component SPC42 (363 aa).

Residues 60–137 adopt a coiled-coil conformation; the sequence is EFINKAVQQN…ANSTFKEMRF (78 aa). The interval 160-184 is disordered; it reads PKHRAPDATGNPRTTNKVSNTSDQD. A compositionally biased stretch (polar residues) spans 170 to 182; sequence NPRTTNKVSNTSD. Residues Ser213, Ser217, Ser284, and Ser329 each carry the phosphoserine modification. Residues 249–298 adopt a coiled-coil conformation; that stretch reads DIMMYESAELKRVEEEIEELKRKILVRKKHDLRKLSLNNQLQELQSMMDG. The tract at residues 310 to 363 is disordered; sequence HNHATHRHSSQSSRDYSPSSDACLECSNDLYEKNRVKPENNMSETFATPTPNNR. Low complexity predominate over residues 319-329; it reads SQSSRDYSPSS. Residues 349 to 363 are compositionally biased toward polar residues; the sequence is NNMSETFATPTPNNR.

It belongs to the SPC42 family. In terms of assembly, component of the SPC110 complex containing at least CMD1, SPC29, SPC42 and SCP110.

The protein localises to the nucleus. It localises to the cytoplasm. Its subcellular location is the cytoskeleton. The protein resides in the microtubule organizing center. It is found in the spindle pole body. Its function is as follows. Forms a polymeric layer at the periphery of the spindle pole body (SPB) central plaque which has an essential function during SPB duplication and may facilitate attachment of the SPB to the nuclear membrane. This is Spindle pole body component SPC42 (SPC42) from Saccharomyces cerevisiae (strain ATCC 204508 / S288c) (Baker's yeast).